The following is a 248-amino-acid chain: Probable transcriptional regulatory protein NGR_c27950 (248 aa).

The protein belongs to the TACO1 family.

It is found in the cytoplasm. The sequence is that of Probable transcriptional regulatory protein NGR_c27950 from Sinorhizobium fredii (strain NBRC 101917 / NGR234).